The chain runs to 342 residues: D-alanine--D-alanine ligase (342 aa).

One can recognise an ATP-grasp domain in the interval 132–326 (KLYAKECGIE…VAKHLPKSKN (195 aa)). An ATP-binding site is contributed by 159-210 (EYPVIIKPNHLGSSIGVSVVYDSSELEYALDVAFEFDDEVLIEPFIEGIEEY). Asp-282, Glu-294, and Asn-296 together coordinate Mg(2+).

The protein belongs to the D-alanine--D-alanine ligase family. The cofactor is Mg(2+). Mn(2+) serves as cofactor.

The protein resides in the cytoplasm. It carries out the reaction 2 D-alanine + ATP = D-alanyl-D-alanine + ADP + phosphate + H(+). It participates in cell wall biogenesis; peptidoglycan biosynthesis. Its function is as follows. Cell wall formation. The sequence is that of D-alanine--D-alanine ligase from Nitratiruptor sp. (strain SB155-2).